Here is a 485-residue protein sequence, read N- to C-terminus: D-alanine--D-alanyl carrier protein ligase (485 aa).

ATP is bound at residue threonine 144–serine 145. Aspartate 189 provides a ligand contact to D-alanine. Asparagine 284 to threonine 289 provides a ligand contact to ATP. Valine 293 lines the D-alanine pocket. Residues aspartate 365 and lysine 473 each coordinate ATP. Lysine 473 is a binding site for D-alanine.

It belongs to the ATP-dependent AMP-binding enzyme family. DltA subfamily.

It localises to the cytoplasm. The enzyme catalyses holo-[D-alanyl-carrier protein] + D-alanine + ATP = D-alanyl-[D-alanyl-carrier protein] + AMP + diphosphate. It functions in the pathway cell wall biogenesis; lipoteichoic acid biosynthesis. Functionally, catalyzes the first step in the D-alanylation of lipoteichoic acid (LTA), the activation of D-alanine and its transfer onto the D-alanyl carrier protein (Dcp) DltC. In an ATP-dependent two-step reaction, forms a high energy D-alanyl-AMP intermediate, followed by transfer of the D-alanyl residue as a thiol ester to the phosphopantheinyl prosthetic group of the Dcp. D-alanylation of LTA plays an important role in modulating the properties of the cell wall in Gram-positive bacteria, influencing the net charge of the cell wall. This chain is D-alanine--D-alanyl carrier protein ligase, found in Staphylococcus haemolyticus (strain JCSC1435).